We begin with the raw amino-acid sequence, 137 residues long: Phosphomevalonate dehydratase small subunit (137 aa).

Catalysis depends on Ser-65, which acts as the Proton acceptor.

It belongs to the AcnX type II small subunit family. Heterodimer composed of a large subunit (PMDh-L) and a small subunit (PMDh-S).

The enzyme catalyses (R)-5-phosphomevalonate = (2E)-3-methyl-5-phosphooxypent-2-enoate + H2O. Its pathway is isoprenoid biosynthesis; isopentenyl diphosphate biosynthesis via mevalonate pathway. Functionally, component of a hydro-lyase that catalyzes the dehydration of mevalonate 5-phosphate (MVA5P) to form trans-anhydromevalonate 5-phosphate (tAHMP). Involved in the archaeal mevalonate (MVA) pathway, which provides fundamental precursors for isoprenoid biosynthesis, such as isopentenyl diphosphate (IPP) and dimethylallyl diphosphate (DMAPP). The sequence is that of Phosphomevalonate dehydratase small subunit from Methanococcoides burtonii (strain DSM 6242 / NBRC 107633 / OCM 468 / ACE-M).